The following is a 1244-amino-acid chain: ATP-dependent helicase/nuclease subunit A (1244 aa).

The UvrD-like helicase ATP-binding domain maps to 4–477 (TKWTEEQLSA…IQLYKNFRSR (474 aa)). 25 to 32 (AAAGSGKT) lines the ATP pocket. Residues 517–811 (KNVDDIIGGP…RIMSIHKSKG (295 aa)) form the UvrD-like helicase C-terminal domain.

Belongs to the helicase family. AddA subfamily. Heterodimer of AddA and AddB/RexB. Requires Mg(2+) as cofactor.

The catalysed reaction is Couples ATP hydrolysis with the unwinding of duplex DNA by translocating in the 3'-5' direction.. The enzyme catalyses ATP + H2O = ADP + phosphate + H(+). In terms of biological role, the heterodimer acts as both an ATP-dependent DNA helicase and an ATP-dependent, dual-direction single-stranded exonuclease. Recognizes the chi site generating a DNA molecule suitable for the initiation of homologous recombination. The AddA nuclease domain is required for chi fragment generation; this subunit has the helicase and 3' -&gt; 5' nuclease activities. The protein is ATP-dependent helicase/nuclease subunit A of Clostridium botulinum (strain Alaska E43 / Type E3).